The primary structure comprises 148 residues: Glutamyl-tRNA(Gln) amidotransferase subunit C, mitochondrial (148 aa).

Belongs to the GatC family. As to quaternary structure, subunit of the heterotrimeric GatCAB amidotransferase (AdT) complex, composed of A, B and C subunits.

It is found in the mitochondrion. The enzyme catalyses L-glutamyl-tRNA(Gln) + L-glutamine + ATP + H2O = L-glutaminyl-tRNA(Gln) + L-glutamate + ADP + phosphate + H(+). Allows the formation of correctly charged Gln-tRNA(Gln) through the transamidation of misacylated Glu-tRNA(Gln) in the mitochondria. The reaction takes place in the presence of glutamine and ATP through an activated gamma-phospho-Glu-tRNA(Gln). The chain is Glutamyl-tRNA(Gln) amidotransferase subunit C, mitochondrial from Drosophila melanogaster (Fruit fly).